Consider the following 289-residue polypeptide: ATP synthase gamma chain (289 aa).

This sequence belongs to the ATPase gamma chain family. F-type ATPases have 2 components, CF(1) - the catalytic core - and CF(0) - the membrane proton channel. CF(1) has five subunits: alpha(3), beta(3), gamma(1), delta(1), epsilon(1). CF(0) has three main subunits: a, b and c.

The protein localises to the cell inner membrane. Produces ATP from ADP in the presence of a proton gradient across the membrane. The gamma chain is believed to be important in regulating ATPase activity and the flow of protons through the CF(0) complex. This chain is ATP synthase gamma chain, found in Azobacteroides pseudotrichonymphae genomovar. CFP2.